The primary structure comprises 296 residues: NAD kinase (296 aa).

The active-site Proton acceptor is the aspartate 72. NAD(+)-binding positions include 72-73 (DG), 146-147 (ND), arginine 157, lysine 174, aspartate 176, 187-192 (TAYALS), and glutamine 247.

The protein belongs to the NAD kinase family. Requires a divalent metal cation as cofactor.

It is found in the cytoplasm. It carries out the reaction NAD(+) + ATP = ADP + NADP(+) + H(+). Involved in the regulation of the intracellular balance of NAD and NADP, and is a key enzyme in the biosynthesis of NADP. Catalyzes specifically the phosphorylation on 2'-hydroxyl of the adenosine moiety of NAD to yield NADP. The polypeptide is NAD kinase (Pseudomonas putida (strain ATCC 700007 / DSM 6899 / JCM 31910 / BCRC 17059 / LMG 24140 / F1)).